The sequence spans 413 residues: 3-oxo-tetronate kinase (413 aa).

ATP-binding positions include S254, 354–357 (GGET), and G397.

This sequence belongs to the four-carbon acid sugar kinase family.

The catalysed reaction is 3-dehydro-L-erythronate + ATP = 3-dehydro-4-O-phospho-L-erythronate + ADP + H(+). It catalyses the reaction 3-dehydro-D-erythronate + ATP = 3-dehydro-4-O-phospho-D-erythronate + ADP + H(+). Its function is as follows. Catalyzes the ATP-dependent phosphorylation of 3-oxo-tetronate to 3-oxo-tetronate 4-phosphate. This is 3-oxo-tetronate kinase from Haemophilus influenzae (strain ATCC 51907 / DSM 11121 / KW20 / Rd).